Here is a 434-residue protein sequence, read N- to C-terminus: Enolase (434 aa).

Position 168 (Gln168) interacts with (2R)-2-phosphoglycerate. The Proton donor role is filled by Glu210. Mg(2+) contacts are provided by Asp247, Glu292, and Asp319. Positions 344, 373, 374, and 395 each coordinate (2R)-2-phosphoglycerate. The active-site Proton acceptor is Lys344.

Belongs to the enolase family. Mg(2+) serves as cofactor.

It localises to the cytoplasm. The protein resides in the secreted. It is found in the cell surface. The enzyme catalyses (2R)-2-phosphoglycerate = phosphoenolpyruvate + H2O. It functions in the pathway carbohydrate degradation; glycolysis; pyruvate from D-glyceraldehyde 3-phosphate: step 4/5. In terms of biological role, catalyzes the reversible conversion of 2-phosphoglycerate (2-PG) into phosphoenolpyruvate (PEP). It is essential for the degradation of carbohydrates via glycolysis. This Endomicrobium trichonymphae protein is Enolase.